A 631-amino-acid chain; its full sequence is Phosphomethylpyrimidine synthase (631 aa).

The segment at 54–80 (TLVGGDKDKPRYETNEPIPVYDTSGPY) is disordered. Residues 58–67 (GDKDKPRYET) are compositionally biased toward basic and acidic residues. Residues asparagine 239, methionine 268, tyrosine 297, histidine 333, 353–355 (SRG), 394–397 (DGLR), and glutamate 433 each bind substrate. Histidine 437 lines the Zn(2+) pocket. Residue tyrosine 460 coordinates substrate. Histidine 501 serves as a coordination point for Zn(2+). Cysteine 581, cysteine 584, and cysteine 589 together coordinate [4Fe-4S] cluster.

This sequence belongs to the ThiC family. Homodimer. [4Fe-4S] cluster serves as cofactor.

It catalyses the reaction 5-amino-1-(5-phospho-beta-D-ribosyl)imidazole + S-adenosyl-L-methionine = 4-amino-2-methyl-5-(phosphooxymethyl)pyrimidine + CO + 5'-deoxyadenosine + formate + L-methionine + 3 H(+). It participates in cofactor biosynthesis; thiamine diphosphate biosynthesis. Its function is as follows. Catalyzes the synthesis of the hydroxymethylpyrimidine phosphate (HMP-P) moiety of thiamine from aminoimidazole ribotide (AIR) in a radical S-adenosyl-L-methionine (SAM)-dependent reaction. The polypeptide is Phosphomethylpyrimidine synthase (Klebsiella pneumoniae subsp. pneumoniae (strain ATCC 700721 / MGH 78578)).